The primary structure comprises 236 residues: MAIYLTELGDSHSFPSPYDALNDPNGLLAFGGDLNPDRILNGYHQGIFPWYGPGEPILWWSPSPRAVFDPLAFKPSKSLKKFQRKQQYKVTLNNATERVIQLCSSTRSAEETWLNEEMQTSYIELARRGHCHSVEVWHDEKLIGGLYGISVGQLFCGESMFSLKDNASKIALWYLCEHLASNQGQLIDCQVMNPHLASLGAFELERDDFVQKLLSLRDRNINLGTFEPQVLQGAVS.

Belongs to the L/F-transferase family.

The protein resides in the cytoplasm. The catalysed reaction is N-terminal L-lysyl-[protein] + L-leucyl-tRNA(Leu) = N-terminal L-leucyl-L-lysyl-[protein] + tRNA(Leu) + H(+). It carries out the reaction N-terminal L-arginyl-[protein] + L-leucyl-tRNA(Leu) = N-terminal L-leucyl-L-arginyl-[protein] + tRNA(Leu) + H(+). The enzyme catalyses L-phenylalanyl-tRNA(Phe) + an N-terminal L-alpha-aminoacyl-[protein] = an N-terminal L-phenylalanyl-L-alpha-aminoacyl-[protein] + tRNA(Phe). Functions in the N-end rule pathway of protein degradation where it conjugates Leu, Phe and, less efficiently, Met from aminoacyl-tRNAs to the N-termini of proteins containing an N-terminal arginine or lysine. The chain is Leucyl/phenylalanyl-tRNA--protein transferase from Vibrio campbellii (strain ATCC BAA-1116).